Consider the following 136-residue polypeptide: Protein NrdI (136 aa).

It belongs to the NrdI family.

In terms of biological role, probably involved in ribonucleotide reductase function. The sequence is that of Protein NrdI from Salmonella newport (strain SL254).